A 381-amino-acid chain; its full sequence is Cytochrome b (381 aa).

Transmembrane regions (helical) follow at residues 38–58, 82–103, 118–138, and 183–203; these read FGSLLGLCLLIQIVIGLFLAM, WLLRTVHANGASFFFICIYFHI, WMTGIALLFLVMAAAFLGYVL, and FFTFHFLIPFLVAGLTMIHLL. His88 and His102 together coordinate heme b. The heme b site is built by His187 and His201. His206 is a binding site for a ubiquinone. Transmembrane regions (helical) follow at residues 231 to 251, 293 to 313, 325 to 345, and 352 to 372; these read IKDTVGFMVLIFFLVTLSLTS, LGGVIALVSSILILVSLPFTF, VAQPLFWSWVSVFLLLTWIGA, and YNFLGQILTCAYFSYFVFTPI.

The protein belongs to the cytochrome b family. The main subunits of complex b-c1 are: cytochrome b, cytochrome c1 and the Rieske protein. The cofactor is heme b.

The protein localises to the mitochondrion inner membrane. Component of the ubiquinol-cytochrome c reductase complex (complex III or cytochrome b-c1 complex) that is part of the mitochondrial respiratory chain. The b-c1 complex mediates electron transfer from ubiquinol to cytochrome c. Contributes to the generation of a proton gradient across the mitochondrial membrane that is then used for ATP synthesis. The polypeptide is Cytochrome b (MT-CYB) (Artemia franciscana (Brine shrimp)).